We begin with the raw amino-acid sequence, 148 residues long: UPF0251 protein Cbei_2962 (148 aa).

It belongs to the UPF0251 family.

In Clostridium beijerinckii (strain ATCC 51743 / NCIMB 8052) (Clostridium acetobutylicum), this protein is UPF0251 protein Cbei_2962.